A 244-amino-acid polypeptide reads, in one-letter code: MSEPVKLRAHNQAHCKDCSLAPLCLPLSLNLEDMDALDEIVKRGRPLKKGEFLFRQGDGFDSVYAVRSGALKTFSLSDSGEEQITGFHLPSELVGLSGMDTESHPVSAQALETTSVCEIPFERLDELALQLPQLRRQLMRVMSREIRDDQQMMLLLSKKTADERIATFLVNLSARFRARGFSANQFRLSMSRNEIGNYLGLAVETVSRVFTRFQQNELIAAEGKEVHILDPIQLCALAGGSVEG.

Alanine 21 to aspartate 149 lines the a nucleoside 3',5'-cyclic phosphate pocket. One can recognise an HTH crp-type domain in the interval lysine 159 to isoleucine 232. The segment at residues arginine 192–threonine 211 is a DNA-binding region (H-T-H motif).

In terms of biological role, transcriptional activator of anaerobic gene expression. Regulates the expression of the components of the hydrogen cyanide synthase (HcnABC) in a positive manner. May also act as an iron sensor. This chain is Transcriptional activator protein Anr, found in Pseudomonas protegens (strain DSM 19095 / LMG 27888 / CFBP 6595 / CHA0).